Consider the following 386-residue polypeptide: Mannitol-1-phosphate 5-dehydrogenase (386 aa).

Position 3-14 (3-14 (AVHFGAGNIGRG)) interacts with NAD(+).

Belongs to the mannitol dehydrogenase family.

The catalysed reaction is D-mannitol 1-phosphate + NAD(+) = beta-D-fructose 6-phosphate + NADH + H(+). The chain is Mannitol-1-phosphate 5-dehydrogenase from Brevibacillus brevis (strain 47 / JCM 6285 / NBRC 100599).